Consider the following 426-residue polypeptide: D-tagatose-1,6-bisphosphate aldolase subunit KbaZ (426 aa).

The protein belongs to the GatZ/KbaZ family. KbaZ subfamily. As to quaternary structure, forms a complex with KbaY.

Its pathway is carbohydrate metabolism; D-tagatose 6-phosphate degradation; D-glyceraldehyde 3-phosphate and glycerone phosphate from D-tagatose 6-phosphate: step 2/2. Functionally, component of the tagatose-1,6-bisphosphate aldolase KbaYZ that is required for full activity and stability of the Y subunit. Could have a chaperone-like function for the proper and stable folding of KbaY. When expressed alone, KbaZ does not show any aldolase activity. The chain is D-tagatose-1,6-bisphosphate aldolase subunit KbaZ from Escherichia fergusonii (strain ATCC 35469 / DSM 13698 / CCUG 18766 / IAM 14443 / JCM 21226 / LMG 7866 / NBRC 102419 / NCTC 12128 / CDC 0568-73).